Here is a 261-residue protein sequence, read N- to C-terminus: uncharacterized protein (261 aa).

The first 22 residues, 1 to 22 (MKYYGKCISYISILILTFFIGG), serve as a signal peptide directing secretion. The N-palmitoyl cysteine moiety is linked to residue cysteine 23. A lipid anchor (S-diacylglycerol cysteine) is attached at cysteine 23.

It belongs to the staphylococcal tandem lipoprotein family.

It is found in the cell membrane. This is an uncharacterized protein from Staphylococcus epidermidis (strain ATCC 12228 / FDA PCI 1200).